We begin with the raw amino-acid sequence, 621 residues long: Chaperone protein HscA homolog (621 aa).

Belongs to the heat shock protein 70 family.

Functionally, chaperone involved in the maturation of iron-sulfur cluster-containing proteins. Has a low intrinsic ATPase activity which is markedly stimulated by HscB. The sequence is that of Chaperone protein HscA homolog from Azotobacter vinelandii (strain DJ / ATCC BAA-1303).